The primary structure comprises 447 residues: Nacrein (447 aa).

The first 17 residues, 1 to 17, serve as a signal peptide directing secretion; it reads MYLHLTALCVVIPLCYG. Residue N44 is glycosylated (N-linked (GlcNAc...) asparagine). The 397-residue stretch at 50 to 446 folds into the Alpha-carbonic anhydrase domain; it reads AGFSYDRSIC…KNKVTVYKSF (397 aa). H149, H151, and H174 together coordinate Zn(2+). The disordered stretch occupies residues 218 to 329; that stretch reads DEPDDEECKH…GENGHKHGCR (112 aa). Positions 224–236 are enriched in basic and acidic residues; it reads ECKHILKGHHPDN. A compositionally biased stretch (low complexity) spans 237-321; that stretch reads NENGNGDNGN…NNGENGNNGE (85 aa). Repeat copies occupy residues 242–244, 245–247, 248–250, 251–253, 254–256, 257–259, 260–262, 263–265, 266–268, 269–271, 272–274, 275–277, 278–280, 281–283, 284–286, 287–289, 290–292, 293–295, 296–298, 299–301, 302–304, 305–307, 308–310, 311–313, 314–316, 317–318, and 320–322. The 27 X 3 AA approximate tandem repeats of G-X-N stretch occupies residues 242–322; that stretch reads GDNGNNGYNG…NGENGNNGEN (81 aa). A glycan (N-linked (GlcNAc...) asparagine) is linked at N261. Position 387–388 (387–388) interacts with substrate; that stretch reads TT.

The protein belongs to the alpha-carbonic anhydrase family. Homooligomer; disulfide-linked. May also be disulfide-linked to insoluble organic matrix. Zn(2+) is required as a cofactor. In terms of processing, N-glycosylated. As to expression, expressed at whole regions of the mantle epithelium tissue. Is found in the aragonitic nacreous and calcitic prismatic and foliated layers.

The protein resides in the secreted. The protein localises to the extracellular space. It localises to the extracellular matrix. The enzyme catalyses hydrogencarbonate + H(+) = CO2 + H2O. Acts as a negative regulator for calcification in the shells of mollusks. May function both as a calcium concentrator and as a carbonic anhydrase required for production of carbonate ions, which are assembled to CaCO(3) at mineralization sites. Is important for shell formation in both the calcitic prismatic layer and the aragonitic nacreous layer. This Pinctada fucata (Akoya pearl oyster) protein is Nacrein.